A 602-amino-acid chain; its full sequence is Elongation factor 4 (602 aa).

A tr-type G domain is found at 7-189 (KYIRNFCIIA…KIVDMIPCPE (183 aa)). GTP-binding positions include 19–24 (DHGKST) and 136–139 (NKID).

It belongs to the TRAFAC class translation factor GTPase superfamily. Classic translation factor GTPase family. LepA subfamily.

The protein localises to the cell membrane. The catalysed reaction is GTP + H2O = GDP + phosphate + H(+). Functionally, required for accurate and efficient protein synthesis under certain stress conditions. May act as a fidelity factor of the translation reaction, by catalyzing a one-codon backward translocation of tRNAs on improperly translocated ribosomes. Back-translocation proceeds from a post-translocation (POST) complex to a pre-translocation (PRE) complex, thus giving elongation factor G a second chance to translocate the tRNAs correctly. Binds to ribosomes in a GTP-dependent manner. In Ruminiclostridium cellulolyticum (strain ATCC 35319 / DSM 5812 / JCM 6584 / H10) (Clostridium cellulolyticum), this protein is Elongation factor 4.